The sequence spans 334 residues: Small ribosomal subunit protein uS2 (334 aa).

This sequence belongs to the universal ribosomal protein uS2 family.

This Xanthobacter autotrophicus (strain ATCC BAA-1158 / Py2) protein is Small ribosomal subunit protein uS2.